A 153-amino-acid polypeptide reads, in one-letter code: Small ribosomal subunit protein bS16 (153 aa).

Residues 121 to 131 show a composition bias toward basic and acidic residues; that stretch reads AEAAAKAKAEA. The segment at 121–153 is disordered; that stretch reads AEAAAKAKAEAEAAAAAEEAPAEEAAEEAPAED. Positions 140 to 153 are enriched in acidic residues; the sequence is APAEEAAEEAPAED.

It belongs to the bacterial ribosomal protein bS16 family.

In Bifidobacterium longum (strain DJO10A), this protein is Small ribosomal subunit protein bS16.